The primary structure comprises 368 residues: Peptide chain release factor 2 (368 aa).

Position 245 is an N5-methylglutamine (Gln245).

It belongs to the prokaryotic/mitochondrial release factor family. In terms of processing, methylated by PrmC. Methylation increases the termination efficiency of RF2.

The protein localises to the cytoplasm. Functionally, peptide chain release factor 2 directs the termination of translation in response to the peptide chain termination codons UGA and UAA. This chain is Peptide chain release factor 2 (prfB), found in Treponema pallidum (strain Nichols).